Reading from the N-terminus, the 455-residue chain is Gamma-aminobutyric acid receptor subunit alpha-1 (455 aa).

The signal sequence occupies residues 1 to 27 (MKRLLVLCDCLWAWSLLLNALTERSYG). Topologically, residues 28 to 253 (QTSSQDELKD…FHLKRKIGYF (226 aa)) are extracellular. N38 carries N-linked (GlcNAc...) asparagine glycosylation. Residue R94 participates in 4-aminobutanoate binding. Residue N138 is glycosylated (N-linked (GlcNAc...) asparagine). T157 contacts 4-aminobutanoate. A disulfide bond links C166 and C180. Residues 254-274 (VIQTYLPCIMTVILSQVSFWL) form a helical membrane-spanning segment. Residues 275-279 (NRESV) lie on the Cytoplasmic side of the membrane. Residues 280-301 (PARTVFGVTTVLTMTTLSISAR) form a helical membrane-spanning segment. Residues 302–311 (NSLPKVAYAT) lie on the Extracellular side of the membrane. The helical transmembrane segment at 312 to 333 (AMDWFIAVCYAFVFSALIEFAT) threads the bilayer. Residues 334–420 (VNYFTKRGYA…TFNSVSKIDR (87 aa)) lie on the Cytoplasmic side of the membrane. The chain crosses the membrane as a helical span at residues 421 to 440 (LSRIAFPLLFGIFNLVYWAT). Residues 441 to 455 (YLNREPQLKAPTPHQ) are Extracellular-facing.

The protein belongs to the ligand-gated ion channel (TC 1.A.9) family. Gamma-aminobutyric acid receptor (TC 1.A.9.5) subfamily. GABRA1 sub-subfamily. In terms of assembly, heteropentamer, formed by a combination of alpha (GABRA1-6), beta (GABRB1-3), gamma (GABRG1-3), delta (GABRD), epsilon (GABRE), rho (GABRR1-3), pi (GABRP) and theta (GABRQ) subunits, each subunit exhibiting distinct physiological and pharmacological properties. Brain.

Its subcellular location is the postsynaptic cell membrane. The protein resides in the cell membrane. The catalysed reaction is chloride(in) = chloride(out). Allosterically activated by benzodiazepines, the neuroanesthetic alphaxalone and pentobarbital. Inhibited by the antagonist bicuculline. Potentiated by histamine. Its function is as follows. Alpha subunit of the heteropentameric ligand-gated chloride channel gated by gamma-aminobutyric acid (GABA), a major inhibitory neurotransmitter in the brain. GABA-gated chloride channels, also named GABA(A) receptors (GABAAR), consist of five subunits arranged around a central pore and contain GABA active binding site(s) located at the alpha and beta subunit interface(s). When activated by GABA, GABAARs selectively allow the flow of chloride anions across the cell membrane down their electrochemical gradient. Chloride influx into the postsynaptic neuron following GABAAR opening decreases the neuron ability to generate a new action potential, thereby reducing nerve transmission. The GABAARs can also initiate the formation of functional inhibitory GABAergic synapses. GABAARs function also as histamine receptor where histamine binds at the interface of two neighboring beta subunits and potentiates GABA response. In Gallus gallus (Chicken), this protein is Gamma-aminobutyric acid receptor subunit alpha-1 (GABRA1).